Consider the following 510-residue polypeptide: Glutamate--tRNA ligase (510 aa).

The 'HIGH' region signature appears at 15–25 (PSPTGDPHVGT). The short motif at 256–260 (KISKR) is the 'KMSKS' region element. K259 is an ATP binding site.

The protein belongs to the class-I aminoacyl-tRNA synthetase family. Glutamate--tRNA ligase type 1 subfamily. In terms of assembly, monomer.

Its subcellular location is the cytoplasm. It catalyses the reaction tRNA(Glu) + L-glutamate + ATP = L-glutamyl-tRNA(Glu) + AMP + diphosphate. In terms of biological role, catalyzes the attachment of glutamate to tRNA(Glu) in a two-step reaction: glutamate is first activated by ATP to form Glu-AMP and then transferred to the acceptor end of tRNA(Glu). The polypeptide is Glutamate--tRNA ligase (Fusobacterium nucleatum subsp. nucleatum (strain ATCC 25586 / DSM 15643 / BCRC 10681 / CIP 101130 / JCM 8532 / KCTC 2640 / LMG 13131 / VPI 4355)).